We begin with the raw amino-acid sequence, 483 residues long: Glutamate--tRNA ligase (483 aa).

The short motif at 9–19 (PSPTGYLHIGN) is the 'HIGH' region element. The 'KMSKS' region signature appears at 250–254 (KLSKR). ATP is bound at residue K253.

It belongs to the class-I aminoacyl-tRNA synthetase family. Glutamate--tRNA ligase type 1 subfamily. In terms of assembly, monomer.

The protein resides in the cytoplasm. The catalysed reaction is tRNA(Glu) + L-glutamate + ATP = L-glutamyl-tRNA(Glu) + AMP + diphosphate. Functionally, catalyzes the attachment of glutamate to tRNA(Glu) in a two-step reaction: glutamate is first activated by ATP to form Glu-AMP and then transferred to the acceptor end of tRNA(Glu). This chain is Glutamate--tRNA ligase, found in Blochmanniella floridana.